The following is a 341-amino-acid chain: tRNA N6-adenosine threonylcarbamoyltransferase (341 aa).

Fe cation-binding residues include His119 and His123. Residues 141–145, Asp174, Gly187, and Asn279 contribute to the substrate site; that span reads MVSGG. Asp307 contacts Fe cation.

Belongs to the KAE1 / TsaD family. Fe(2+) serves as cofactor.

The protein localises to the cytoplasm. It carries out the reaction L-threonylcarbamoyladenylate + adenosine(37) in tRNA = N(6)-L-threonylcarbamoyladenosine(37) in tRNA + AMP + H(+). Functionally, required for the formation of a threonylcarbamoyl group on adenosine at position 37 (t(6)A37) in tRNAs that read codons beginning with adenine. Is involved in the transfer of the threonylcarbamoyl moiety of threonylcarbamoyl-AMP (TC-AMP) to the N6 group of A37, together with TsaE and TsaB. TsaD likely plays a direct catalytic role in this reaction. The sequence is that of tRNA N6-adenosine threonylcarbamoyltransferase from Oenococcus oeni (strain ATCC BAA-331 / PSU-1).